The chain runs to 282 residues: MIEQRPVSNLIGHLILILGIIIVAFPIYYTFVASLMTSTQIIRPPISLLPGDHLVENYREAIFGGVERVVGVSLERLLWNSFVVAMAIAVGKIIISFMSAFAIVFFRFPMRMFFFWMIFITLMLPVEVRILPTYKVIVDLGMIDTYAGLTLPLMASATATFLFRQFFLTIPGELVEAARIDNAGPFRFMRDILLPLSKTNIAALFVILSIYGWTQYLWPLLVTNDAKMNTIIIGLRRMVDWADASTSWNYVMVTAILAIIPPILVVVLMQRWFVKGLVETEK.

Helical transmembrane passes span 14–34 (LILILGIIIVAFPIYYTFVAS), 86–106 (MAIAVGKIIISFMSAFAIVFF), 112–132 (MFFFWMIFITLMLPVEVRILP), 146–168 (YAGLTLPLMASATATFLFRQFFL), 201–221 (IAALFVILSIYGWTQYLWPLL), and 248–268 (WNYVMVTAILAIIPPILVVVL). Residues 78–269 (LWNSFVVAMA…IPPILVVVLM (192 aa)) enclose the ABC transmembrane type-1 domain.

Belongs to the binding-protein-dependent transport system permease family. In terms of assembly, the complex is composed of two ATP-binding proteins (UgpC), two transmembrane proteins (UgpA and UgpE) and a solute-binding protein (UgpB).

The protein resides in the cell inner membrane. Functionally, part of the ABC transporter complex UgpBAEC involved in sn-glycerol-3-phosphate (G3P) import. Probably responsible for the translocation of the substrate across the membrane. In Brucella suis biovar 1 (strain 1330), this protein is sn-glycerol-3-phosphate transport system permease protein UgpE (ugpE).